Here is a 672-residue protein sequence, read N- to C-terminus: tRNA 5-methylaminomethyl-2-thiouridine biosynthesis bifunctional protein MnmC (672 aa).

Residues 1–241 (MHKVQFADVH…KRECLQGVKA (241 aa)) form a tRNA (mnm(5)s(2)U34)-methyltransferase region. The FAD-dependent cmnm(5)s(2)U34 oxidoreductase stretch occupies residues 269-672 (IGGGIASVFS…LLKGSQVKQG (404 aa)).

The protein in the N-terminal section; belongs to the methyltransferase superfamily. tRNA (mnm(5)s(2)U34)-methyltransferase family. In the C-terminal section; belongs to the DAO family. FAD serves as cofactor.

Its subcellular location is the cytoplasm. It carries out the reaction 5-aminomethyl-2-thiouridine(34) in tRNA + S-adenosyl-L-methionine = 5-methylaminomethyl-2-thiouridine(34) in tRNA + S-adenosyl-L-homocysteine + H(+). In terms of biological role, catalyzes the last two steps in the biosynthesis of 5-methylaminomethyl-2-thiouridine (mnm(5)s(2)U) at the wobble position (U34) in tRNA. Catalyzes the FAD-dependent demodification of cmnm(5)s(2)U34 to nm(5)s(2)U34, followed by the transfer of a methyl group from S-adenosyl-L-methionine to nm(5)s(2)U34, to form mnm(5)s(2)U34. The protein is tRNA 5-methylaminomethyl-2-thiouridine biosynthesis bifunctional protein MnmC of Pasteurella multocida (strain Pm70).